The sequence spans 203 residues: Cardiotrophin-2 (203 aa).

A signal peptide spans 1-21 (MSCSLARLCLLTLLSPPLSSA). Residue asparagine 43 is glycosylated (N-linked (GlcNAc...) asparagine).

The protein belongs to the IL-6 superfamily.

The protein localises to the secreted. In terms of biological role, may have an important role in neuronal precursor development and maturation. This is Cardiotrophin-2 (CTF2) from Pan troglodytes (Chimpanzee).